We begin with the raw amino-acid sequence, 444 residues long: CRAL-TRIO domain-containing protein C3H8.02 (444 aa).

The residue at position 40 (S40) is a Phosphoserine. T43 bears the Phosphothreonine mark. S81 bears the Phosphoserine mark. The region spanning 171 to 330 (DDDFVRQLRI…EFGGPNPWRY (160 aa)) is the CRAL-TRIO domain. T418 is modified (phosphothreonine).

This is CRAL-TRIO domain-containing protein C3H8.02 from Schizosaccharomyces pombe (strain 972 / ATCC 24843) (Fission yeast).